We begin with the raw amino-acid sequence, 566 residues long: Solute carrier family 2, facilitated glucose transporter member 9 (566 aa).

The tract at residues 1–31 (MARKQNRNSKELGLAPLADDTSHAGPPGPGR) is disordered. The Cytoplasmic segment spans residues 1 to 51 (MARKQNRNSKELGLAPLADDTSHAGPPGPGRALLECDHLRSGLPDGRRRKD). Phosphoserine is present on S9. The helical transmembrane segment at 52 to 72 (WSCSLLVASLAGAFGSSFLYG) threads the bilayer. Topologically, residues 73 to 107 (YNLSVVNAPTPYIKAFYNESWERRHGRPIDPDTLT) are extracellular. 2 N-linked (GlcNAc...) asparagine glycosylation sites follow: N74 and N90. Residues 108–128 (LLWSVTVSIFAIGGLVGTLMV) form a helical membrane-spanning segment. At 129-140 (KMIGKVLGRKHT) the chain is on the cytoplasmic side. Residues 141–161 (LLANNGFAISAALLMACSLQA) traverse the membrane as a helical segment. Over 162–171 (GAFEMLIVGR) the chain is Extracellular. The helical transmembrane segment at 172–192 (FIMGIDGGIALSVLPMYLSEI) threads the bilayer. Topologically, residues 193–200 (SPKEIRGS) are cytoplasmic. Residues 201-221 (LGQVTAIFICIGVFTGQLLGL) traverse the membrane as a helical segment. Over 222–231 (PELLGKESTW) the chain is Extracellular. The helical transmembrane segment at 232–252 (PYLFGVIVVPAVVQLLSLPFL) threads the bilayer. Residues 253–316 (PDSPRYLLLE…LRAPYVRWQV (64 aa)) lie on the Cytoplasmic side of the membrane. The helical transmembrane segment at 317-337 (VTVIVTMACYQLCGLNAIWFY) threads the bilayer. The Extracellular portion of the chain corresponds to 338–354 (TNSIFGKAGIPPAKIPY). A helical transmembrane segment spans residues 355-375 (VTLSTGGIETLAAIFSGLVIE). Topologically, residues 376-381 (HLGRRP) are cytoplasmic. A helical membrane pass occupies residues 382 to 402 (LLIGGFGLMALFFGTLTVTLT). The Extracellular segment spans residues 403–415 (LQDRAPWVPYLSI). A helical transmembrane segment spans residues 416 to 436 (VGILAIIASFCSGPGGIPFIL). Topologically, residues 437-451 (TGEFFQQSQRPAAFI) are cytoplasmic. The helical transmembrane segment at 452–472 (IAGTVNWLSNFAVGLLFPFIQ) threads the bilayer. Residues 473-478 (KSLDTY) lie on the Extracellular side of the membrane. A helical transmembrane segment spans residues 479-499 (CFLVFATICMTGAIYLYFVLP). Residues 500-566 (ETKNRTYAEI…YMDDLTFQET (67 aa)) are Cytoplasmic-facing. S514 is modified (phosphoserine). Residues 524–539 (EKIDSAVTDGKTKGRP) show a composition bias toward basic and acidic residues. Residues 524-543 (EKIDSAVTDGKTKGRPEQVS) are disordered.

It belongs to the major facilitator superfamily. Sugar transporter (TC 2.A.1.1) family.

Its subcellular location is the basolateral cell membrane. It localises to the apical cell membrane. It catalyses the reaction urate(out) = urate(in). Functionally, high-capacity urate transporter, which may play a role in the urate reabsorption by proximal tubules. May have a residual high-affinity, low-capacity glucose and fructose transporter activity. Transports urate at rates 45- to 60-fold faster than glucose. Does not transport galactose. May mediate small uptake of adenine but not of other nucleobases. This is Solute carrier family 2, facilitated glucose transporter member 9 from Pongo abelii (Sumatran orangutan).